Consider the following 257-residue polypeptide: Aspartate/glutamate leucyltransferase (257 aa).

This sequence belongs to the R-transferase family. Bpt subfamily.

The protein resides in the cytoplasm. The catalysed reaction is N-terminal L-glutamyl-[protein] + L-leucyl-tRNA(Leu) = N-terminal L-leucyl-L-glutamyl-[protein] + tRNA(Leu) + H(+). It catalyses the reaction N-terminal L-aspartyl-[protein] + L-leucyl-tRNA(Leu) = N-terminal L-leucyl-L-aspartyl-[protein] + tRNA(Leu) + H(+). In terms of biological role, functions in the N-end rule pathway of protein degradation where it conjugates Leu from its aminoacyl-tRNA to the N-termini of proteins containing an N-terminal aspartate or glutamate. The polypeptide is Aspartate/glutamate leucyltransferase (Rhodopseudomonas palustris (strain HaA2)).